A 474-amino-acid chain; its full sequence is Transmembrane transporter FVEG_12640 (474 aa).

Polar residues predominate over residues 1–15 (MASPTISSMEQYTPS). A disordered region spans residues 1–39 (MASPTISSMEQYTPSSKDEKIVPLHGDAAGSDTEKGESR). 10 consecutive transmembrane segments (helical) span residues 72 to 92 (ILAIPGALGALGSVGGSLCIV), 133 to 153 (LVGVQIIVAQVLISAGGIVTS), 164 to 184 (GTCTVMFALVSAILITLFSSI), 192 to 212 (WLTWFGFITFVLGVFIFVVAV), 231 to 251 (WAPIAYPSFVVGMINATNIFI), 275 to 295 (ACLVAGFIVGAMYLSFSLVIY), 317 to 337 (VAYGVSLPGLILGVGIYQHVA), 364 to 384 (LGINLALGTAAFIVAEAVPIL), 387 to 407 (LLGLAGSLCFAPFSLVFPALL), and 431 to 451 (LIMILGFYMIVAGTYSVAVLI).

It belongs to the amino acid/polyamine transporter 2 family.

The protein resides in the membrane. Transmembrane transporter; part of the Fusarium detoxification of benzoxazolinone cluster 2 (FDB2) involved in the degradation of benzoxazolinones produced by the host plant. Maize, wheat, and rye produce the 2 benzoxazinone phytoanticipins 2,4-dihy-droxy-7-methoxy-1,4-benzoxazin-3-one (DIMBOA) and 2,4-dihydroxy-1,4-benzoxazin-3-one (DIBOA) that, due to their inherent instability once released, spontaneously degrade to the more stable corresponding benzoxazolinones, 6-methoxy-2-benzoxazolinone (MBOA) and 2-benzoxazolinone (BOA), respectively. Might be involved in the transport of metabolites of benzoxazolinone degradation. The sequence is that of Transmembrane transporter FVEG_12640 from Gibberella moniliformis (strain M3125 / FGSC 7600) (Maize ear and stalk rot fungus).